A 231-amino-acid chain; its full sequence is Putative carboxymethylenebutenolidase (231 aa).

Residues cysteine 118, aspartate 167, and histidine 199 contribute to the active site.

This sequence belongs to the dienelactone hydrolase family.

The catalysed reaction is 2-(5-oxo-2,5-dihydrofuran-2-ylidene)acetate + H2O = 4-oxohex-2-enedioate + H(+). The protein is Putative carboxymethylenebutenolidase of Aquifex aeolicus (strain VF5).